The primary structure comprises 302 residues: tRNA-cytidine(32) 2-sulfurtransferase (302 aa).

The PP-loop motif motif lies at Ser-44–Ser-49. The [4Fe-4S] cluster site is built by Cys-119, Cys-122, and Cys-210.

It belongs to the TtcA family. In terms of assembly, homodimer. Mg(2+) is required as a cofactor. [4Fe-4S] cluster serves as cofactor.

The protein resides in the cytoplasm. The catalysed reaction is cytidine(32) in tRNA + S-sulfanyl-L-cysteinyl-[cysteine desulfurase] + AH2 + ATP = 2-thiocytidine(32) in tRNA + L-cysteinyl-[cysteine desulfurase] + A + AMP + diphosphate + H(+). Its pathway is tRNA modification. Functionally, catalyzes the ATP-dependent 2-thiolation of cytidine in position 32 of tRNA, to form 2-thiocytidine (s(2)C32). The sulfur atoms are provided by the cysteine/cysteine desulfurase (IscS) system. This chain is tRNA-cytidine(32) 2-sulfurtransferase, found in Tolumonas auensis (strain DSM 9187 / NBRC 110442 / TA 4).